The chain runs to 314 residues: uncharacterized protein (314 aa).

The region spanning 192–289 (TEVKLHIKDN…GSSPGLFRSL (98 aa)) is the HTH araC/xylS-type domain. 2 DNA-binding regions (H-T-H motif) span residues 209-230 (TDVA…AAEL) and 257-279 (IKEI…SAKI).

This is an uncharacterized protein from Bacillus subtilis (strain 168).